Consider the following 48-residue polypeptide: Large ribosomal subunit protein bL34 (48 aa).

The protein belongs to the bacterial ribosomal protein bL34 family.

The chain is Large ribosomal subunit protein bL34 from Gloeothece citriformis (strain PCC 7424) (Cyanothece sp. (strain PCC 7424)).